The following is a 256-amino-acid chain: Acetyl-coenzyme A carboxylase carboxyl transferase subunit alpha (256 aa).

A CoA carboxyltransferase C-terminal domain is found at M1–E236.

The protein belongs to the AccA family. In terms of assembly, acetyl-CoA carboxylase is a heterohexamer composed of biotin carboxyl carrier protein (AccB), biotin carboxylase (AccC) and two subunits each of ACCase subunit alpha (AccA) and ACCase subunit beta (AccD).

The protein localises to the cytoplasm. It catalyses the reaction N(6)-carboxybiotinyl-L-lysyl-[protein] + acetyl-CoA = N(6)-biotinyl-L-lysyl-[protein] + malonyl-CoA. It functions in the pathway lipid metabolism; malonyl-CoA biosynthesis; malonyl-CoA from acetyl-CoA: step 1/1. Functionally, component of the acetyl coenzyme A carboxylase (ACC) complex. First, biotin carboxylase catalyzes the carboxylation of biotin on its carrier protein (BCCP) and then the CO(2) group is transferred by the carboxyltransferase to acetyl-CoA to form malonyl-CoA. The polypeptide is Acetyl-coenzyme A carboxylase carboxyl transferase subunit alpha (Streptococcus thermophilus (strain CNRZ 1066)).